An 850-amino-acid chain; its full sequence is Mitochondrial escape protein 2 (850 aa).

The N-terminal 44 residues, 1 to 44 (MLLVRTTSLNVSRMPVPCLARGIGILKGKYRLANLMNAQPSVRH), are a transit peptide targeting the mitochondrion. The disordered stretch occupies residues 44–66 (HVSSEIQQKDQQAGESNTATDTG). The Mitochondrial matrix segment spans residues 45–287 (VSSEIQQKDQ…VSNFFTNHTR (243 aa)). The segment covering 47 to 64 (SEIQQKDQQAGESNTATD) has biased composition (polar residues). In terms of domain architecture, RRM spans 198–272 (TTIVIKFQGP…TVLHIQYENI (75 aa)). The chain crosses the membrane as a helical span at residues 288–308 (IAIPVLFALLSIFAVLVFDPI). The Mitochondrial intermembrane portion of the chain corresponds to 309 to 850 (REFSIEQKIT…CEEEIKNLSK (542 aa)). The span at 607–621 (KGENVKEPESEKETA) shows a compositional bias: basic and acidic residues. Residues 607–633 (KGENVKEPESEKETAENNDSDSEADTS) form a disordered region.

The protein belongs to the YME2 family.

The protein localises to the mitochondrion inner membrane. In terms of biological role, plays a role in maintaining the mitochondrial genome and in controlling the mtDNA escape. Involved in the regulation of mtDNA nucleotide structure and number. May have a dispensable role in early maturation of pre-rRNA. The sequence is that of Mitochondrial escape protein 2 (YME2) from Saccharomyces cerevisiae (strain ATCC 204508 / S288c) (Baker's yeast).